Reading from the N-terminus, the 930-residue chain is Translation initiation factor IF-2 (930 aa).

Low complexity predominate over residues F50–V67. Disordered regions lie at residues F50–D195 and E260–P346. Composition is skewed to basic and acidic residues over residues S68 to P90 and F110 to R125. The segment covering K129 to R141 has biased composition (low complexity). 2 stretches are compositionally biased toward basic and acidic residues: residues R157–K167 and V262–R295. Over residues N309–N318 the composition is skewed to low complexity. The span at V337–P346 shows a compositional bias: basic and acidic residues. One can recognise a tr-type G domain in the interval E432–E599. The tract at residues G441 to T448 is G1. G441 to T448 provides a ligand contact to GTP. A G2 region spans residues G466–H470. Residues D487 to G490 are G3. GTP-binding positions include D487 to H491 and N541 to D544. The segment at N541–D544 is G4. The segment at S577–K579 is G5.

The protein belongs to the TRAFAC class translation factor GTPase superfamily. Classic translation factor GTPase family. IF-2 subfamily.

It localises to the cytoplasm. Its function is as follows. One of the essential components for the initiation of protein synthesis. Protects formylmethionyl-tRNA from spontaneous hydrolysis and promotes its binding to the 30S ribosomal subunits. Also involved in the hydrolysis of GTP during the formation of the 70S ribosomal complex. This is Translation initiation factor IF-2 from Streptococcus pneumoniae (strain Hungary19A-6).